We begin with the raw amino-acid sequence, 258 residues long: 2S seed storage albumin protein (258 aa).

The first 24 residues, 1–24, serve as a signal peptide directing secretion; the sequence is MAKLIPTIALVSVLLFIIANASFA. The propeptide occupies 25-35; the sequence is YRTTITTIEID. 4 cysteine pairs are disulfide-bonded: C49–C108, C61–C97, C98–C145, and C110–C149. Positions 64–87 are disordered; it reads YLRQSSSRRSPGEEVLRMPGDENQ. S69 is subject to Phosphoserine. The segment covering 73–83 has biased composition (basic and acidic residues); sequence SPGEEVLRMPG. Positions 77–86 are excised as a propeptide; the sequence is EVLRMPGDEN. Q87 is subject to Pyrrolidone carboxylic acid. 2 propeptides span residues 154–156 and 191–193; these read RTN and SDN. Intrachain disulfides connect C162–C212, C175–C201, C202–C249, and C214–C256. Residue Q194 is modified to Pyrrolidone carboxylic acid.

Belongs to the 2S seed storage albumins family. The 2 mature proteins consist of heterodimers of a small and a large chain; disulfide-linked. Post-translationally, the N-terminus of both large chains is blocked. The C-terminus of the allergen Ric c 1 and allergen Ric c 3 small chains are heterogeneous and the length of the chains can vary from 33 to 36 amino acids and from 36 to 40 amino acids respectively.

Functionally, 2S seed storage proteins. This is 2S seed storage albumin protein from Ricinus communis (Castor bean).